We begin with the raw amino-acid sequence, 340 residues long: DNA-directed RNA polymerase subunit alpha (340 aa).

Residues 1 to 233 form an alpha N-terminal domain (alpha-NTD) region; sequence MIQDEIKVST…DLFIPLINSE (233 aa). The tract at residues 265–340 is alpha C-terminal domain (alpha-CTD); that stretch reads TKDVAFKHIF…IQLPKNKNYL (76 aa).

It belongs to the RNA polymerase alpha chain family. In terms of assembly, in plastids the minimal PEP RNA polymerase catalytic core is composed of four subunits: alpha, beta, beta', and beta''. When a (nuclear-encoded) sigma factor is associated with the core the holoenzyme is formed, which can initiate transcription.

It localises to the plastid. It is found in the chloroplast. The enzyme catalyses RNA(n) + a ribonucleoside 5'-triphosphate = RNA(n+1) + diphosphate. In terms of biological role, DNA-dependent RNA polymerase catalyzes the transcription of DNA into RNA using the four ribonucleoside triphosphates as substrates. The chain is DNA-directed RNA polymerase subunit alpha from Marchantia polymorpha (Common liverwort).